Here is a 288-residue protein sequence, read N- to C-terminus: Glycine--tRNA ligase alpha subunit (288 aa).

The protein belongs to the class-II aminoacyl-tRNA synthetase family. As to quaternary structure, tetramer of two alpha and two beta subunits.

The protein localises to the cytoplasm. It carries out the reaction tRNA(Gly) + glycine + ATP = glycyl-tRNA(Gly) + AMP + diphosphate. This is Glycine--tRNA ligase alpha subunit from Rickettsia canadensis (strain McKiel).